Reading from the N-terminus, the 341-residue chain is Anthranilate phosphoribosyltransferase (341 aa).

5-phospho-alpha-D-ribose 1-diphosphate is bound by residues Gly-79, 82–83 (GD), Thr-87, 89–92 (NIST), 107–115 (KHGGRSVSS), and Ser-119. Gly-79 is a binding site for anthranilate. Ser-91 provides a ligand contact to Mg(2+). Position 165 (Arg-165) interacts with anthranilate. Residues Asp-224 and Glu-225 each contribute to the Mg(2+) site.

It belongs to the anthranilate phosphoribosyltransferase family. Homodimer. Mg(2+) serves as cofactor.

The catalysed reaction is N-(5-phospho-beta-D-ribosyl)anthranilate + diphosphate = 5-phospho-alpha-D-ribose 1-diphosphate + anthranilate. It participates in amino-acid biosynthesis; L-tryptophan biosynthesis; L-tryptophan from chorismate: step 2/5. Functionally, catalyzes the transfer of the phosphoribosyl group of 5-phosphorylribose-1-pyrophosphate (PRPP) to anthranilate to yield N-(5'-phosphoribosyl)-anthranilate (PRA). The polypeptide is Anthranilate phosphoribosyltransferase (Ruminiclostridium cellulolyticum (strain ATCC 35319 / DSM 5812 / JCM 6584 / H10) (Clostridium cellulolyticum)).